We begin with the raw amino-acid sequence, 279 residues long: Orotidine 5'-phosphate decarboxylase (279 aa).

Substrate is bound by residues Asp-8, Lys-30, 58–67 (DLKIHDIPNT), Thr-117, Arg-177, Gln-186, Gly-206, and Arg-207. The active-site Proton donor is the Lys-60.

This sequence belongs to the OMP decarboxylase family. Type 1 subfamily. As to quaternary structure, homodimer.

It catalyses the reaction orotidine 5'-phosphate + H(+) = UMP + CO2. Its pathway is pyrimidine metabolism; UMP biosynthesis via de novo pathway; UMP from orotate: step 2/2. Catalyzes the decarboxylation of orotidine 5'-monophosphate (OMP) to uridine 5'-monophosphate (UMP). The protein is Orotidine 5'-phosphate decarboxylase of Campylobacter jejuni (strain RM1221).